Consider the following 265-residue polypeptide: Homeobox protein Nkx-6.3 (265 aa).

A DNA-binding region (homeobox) is located at residues 139 to 198; the sequence is KKHTRPTFTGHQIFALEKTFEQTKYLAGPERARLAYSLGMTESQVKVWFQNRRTKWRKKS. Residues 196 to 240 are disordered; that stretch reads KKSALEPSSSTPRAPGGAGAGAGGDRAPSENEDDEYNKPLDPDSD.

Its subcellular location is the nucleus. Putative transcription factor, which may be involved in patterning of central nervous system and pancreas. This chain is Homeobox protein Nkx-6.3 (NKX6-3), found in Homo sapiens (Human).